Consider the following 414-residue polypeptide: Ribulose bisphosphate carboxylase large chain (414 aa).

Asn-101 and Thr-151 together coordinate substrate. Lys-153 acts as the Proton acceptor in catalysis. Lys-155 provides a ligand contact to substrate. Mg(2+) is bound by residues Lys-179, Asp-181, and Glu-182. Position 179 is an N6-carboxylysine (Lys-179). Residue His-272 is the Proton acceptor of the active site. Residues Arg-273, His-305, and Ser-357 each coordinate substrate.

This sequence belongs to the RuBisCO large chain family. Type I subfamily. As to quaternary structure, heterohexadecamer of 8 large chains and 8 small chains; disulfide-linked. The disulfide link is formed within the large subunit homodimers. It depends on Mg(2+) as a cofactor. The disulfide bond which can form in the large chain dimeric partners within the hexadecamer appears to be associated with oxidative stress and protein turnover.

Its subcellular location is the plastid. The protein resides in the chloroplast. The catalysed reaction is 2 (2R)-3-phosphoglycerate + 2 H(+) = D-ribulose 1,5-bisphosphate + CO2 + H2O. It catalyses the reaction D-ribulose 1,5-bisphosphate + O2 = 2-phosphoglycolate + (2R)-3-phosphoglycerate + 2 H(+). Functionally, ruBisCO catalyzes two reactions: the carboxylation of D-ribulose 1,5-bisphosphate, the primary event in carbon dioxide fixation, as well as the oxidative fragmentation of the pentose substrate in the photorespiration process. Both reactions occur simultaneously and in competition at the same active site. In Onychium japonicum (Japanese claw fern), this protein is Ribulose bisphosphate carboxylase large chain (rbcL).